A 100-amino-acid polypeptide reads, in one-letter code: uncharacterized protein (100 aa).

This is an uncharacterized protein from Mycoplasma genitalium (strain ATCC 33530 / DSM 19775 / NCTC 10195 / G37) (Mycoplasmoides genitalium).